The chain runs to 92 residues: MASLGHILVFCVGLLTMAKAESPKEHDPFTYDYQSLQIGGLVIAGILFILGILIVLSRRCRCKFNQQQRTGEPDEEEGTFRSSIRRLSTRRR.

A signal peptide spans 1 to 20 (MASLGHILVFCVGLLTMAKA). Topologically, residues 21-35 (ESPKEHDPFTYDYQS) are extracellular. Residues 36–56 (LQIGGLVIAGILFILGILIVL) form a helical membrane-spanning segment. Over 57 to 92 (SRRCRCKFNQQQRTGEPDEEEGTFRSSIRRLSTRRR) the chain is Cytoplasmic. A lipid anchor (S-palmitoyl cysteine) is attached at cysteine 60. Cysteine 62 carries the S-glutathionyl cysteine; alternate modification. Residue cysteine 62 is the site of S-palmitoyl cysteine; alternate attachment. The tract at residues 65–92 (NQQQRTGEPDEEEGTFRSSIRRLSTRRR) is disordered. The residue at position 79 (threonine 79) is a Phosphothreonine. Serine 82 bears the Phosphoserine mark. A Phosphoserine; by PKA and PKC modification is found at serine 83. Over residues 83–92 (SIRRLSTRRR) the composition is skewed to basic residues. Position 88 is a phosphoserine; by PKA (serine 88). At threonine 89 the chain carries Phosphothreonine; by PKC.

The protein belongs to the FXYD family. In terms of assembly, homotetramer. Monomer. Regulatory subunit of the sodium/potassium-transporting ATPase (NKA) which is composed of a catalytic alpha subunit, an auxiliary non-catalytic beta subunit and an additional regulatory subunit. The monomeric form associates with NKA while the oligomeric form does not. Interacts with the catalytic alpha-1 subunit ATP1A1. Also interacts with the catalytic alpha-2 and alpha-3 subunits ATP1A2 and ATP1A3. Very little interaction with ATP1A1, ATP1A2 or ATP1A3 when phosphorylated at Ser-83. Interacts with the non-catalytic beta-1 subunit ATP1B1. Oxidative stress decreases interaction with ATP1A1 but increases interaction with ATP1B1. Major plasma membrane substrate for cAMP-dependent protein kinase (PKA) and protein kinase C (PKC) in several different tissues. Phosphorylated in response to insulin and adrenergic stimulation. Phosphorylation at Ser-88 stimulates sodium/potassium-transporting ATPase activity while the unphosphorylated form inhibits sodium/potassium-transporting ATPase activity. Phosphorylation increases tetramerization, decreases binding to ATP1A1 and reduces inhibition of ATP1A1 activity. Phosphorylation at Ser-83 leads to greatly reduced interaction with ATP1A1, ATP1A2 and ATP1A3. May be phosphorylated by DMPK. Post-translationally, palmitoylation increases half-life and stability and is enhanced upon phosphorylation at Ser-88 by PKA. Highest expression in skeletal muscle and heart. Moderate levels in brain, placenta, lung, liver, pancreas, uterus, bladder, prostate, small intestine and colon with mucosal lining. Very low levels in kidney, colon and small intestine without mucosa, prostate without endothelial lining, spleen, and testis.

The protein localises to the cell membrane. Its subcellular location is the sarcolemma. It is found in the apical cell membrane. It localises to the membrane. The protein resides in the caveola. The protein localises to the T-tubule. Associates with and regulates the activity of the sodium/potassium-transporting ATPase (NKA) which transports Na(+) out of the cell and K(+) into the cell. Inhibits NKA activity in its unphosphorylated state and stimulates activity when phosphorylated. Reduces glutathionylation of the NKA beta-1 subunit ATP1B1, thus reversing glutathionylation-mediated inhibition of ATP1B1. Contributes to female sexual development by maintaining the excitability of neurons which secrete gonadotropin-releasing hormone. The chain is Phospholemman from Homo sapiens (Human).